We begin with the raw amino-acid sequence, 443 residues long: Dynein regulatory complex protein 9 (443 aa).

2 disordered regions span residues 1–40 (MEEDSQEDSNLPPKVWHSEMTVSVTGKPPSTVEEDGLPKE) and 415–443 (GFKMPKDKVDSKDSKGKGKGKDKRRGKKK). The 30-residue stretch at 393 to 422 (ELKSVIKLQAWWRGTMIRREIGGFKMPKDK) folds into the IQ domain. Residues 415-430 (GFKMPKDKVDSKDSKG) are compositionally biased toward basic and acidic residues. Residues 431-443 (KGKGKDKRRGKKK) are compositionally biased toward basic residues.

This sequence belongs to the DRC9 family. In terms of assembly, component of the nexin-dynein regulatory complex (N-DRC). Interacts (via IQ domain) with CALM when calcium levels are low. Does not interact with CALM in the presence of Ca(2+). Interacts with the HSP70 proteins HSPA1L and HSPA8. May form a complex with CAMK4 and HSP70.

The protein localises to the cytoplasm. Its subcellular location is the cell projection. It is found in the cilium. It localises to the flagellum. The protein resides in the cytoskeleton. The protein localises to the flagellum axoneme. In terms of biological role, component of the nexin-dynein regulatory complex (N-DRC), a key regulator of ciliary/flagellar motility which maintains the alignment and integrity of the distal axoneme and regulates microtubule sliding in motile axonemes. Binds calmodulin when cellular Ca(2+) levels are low and thereby contributes to the regulation of calcium and calmodulin-dependent protein kinase IV (CAMK4) activity; contributes to the regulation of CAMK4 signaling cascades. Required for normal axoneme assembly in sperm flagella, normal sperm tail formation and for male fertility. The sequence is that of Dynein regulatory complex protein 9 (IQCG) from Macaca fascicularis (Crab-eating macaque).